The chain runs to 381 residues: Queuine tRNA-ribosyltransferase (381 aa).

The Proton acceptor role is filled by D89. Substrate is bound by residues 89 to 93 (DSGGF), D143, Q187, and G214. Residues 245-251 (GVGKPED) are RNA binding. The active-site Nucleophile is D264. Positions 269 to 273 (TRNAR) are RNA binding; important for wobble base 34 recognition. 4 residues coordinate Zn(2+): C302, C304, C307, and H333.

This sequence belongs to the queuine tRNA-ribosyltransferase family. Homodimer. Within each dimer, one monomer is responsible for RNA recognition and catalysis, while the other monomer binds to the replacement base PreQ1. The cofactor is Zn(2+).

The enzyme catalyses 7-aminomethyl-7-carbaguanine + guanosine(34) in tRNA = 7-aminomethyl-7-carbaguanosine(34) in tRNA + guanine. It participates in tRNA modification; tRNA-queuosine biosynthesis. Functionally, catalyzes the base-exchange of a guanine (G) residue with the queuine precursor 7-aminomethyl-7-deazaguanine (PreQ1) at position 34 (anticodon wobble position) in tRNAs with GU(N) anticodons (tRNA-Asp, -Asn, -His and -Tyr). Catalysis occurs through a double-displacement mechanism. The nucleophile active site attacks the C1' of nucleotide 34 to detach the guanine base from the RNA, forming a covalent enzyme-RNA intermediate. The proton acceptor active site deprotonates the incoming PreQ1, allowing a nucleophilic attack on the C1' of the ribose to form the product. After dissociation, two additional enzymatic reactions on the tRNA convert PreQ1 to queuine (Q), resulting in the hypermodified nucleoside queuosine (7-(((4,5-cis-dihydroxy-2-cyclopenten-1-yl)amino)methyl)-7-deazaguanosine). The protein is Queuine tRNA-ribosyltransferase of Pectobacterium carotovorum subsp. carotovorum (strain PC1).